A 422-amino-acid chain; its full sequence is Phosphoribosylamine--glycine ligase (422 aa).

One can recognise an ATP-grasp domain in the interval 107–312 (KEVMAAAGVR…LGQLLYAAGT (206 aa)). An ATP-binding site is contributed by 138–193 (PPVGDLSWVVKDDRLAAGKGVVVTSDRDVARTHAAGLLEAGHPVLLESYLDGPEVS). 2 residues coordinate Mg(2+): glutamate 282 and asparagine 284.

It belongs to the GARS family. Requires Mg(2+) as cofactor. It depends on Mn(2+) as a cofactor.

It carries out the reaction 5-phospho-beta-D-ribosylamine + glycine + ATP = N(1)-(5-phospho-beta-D-ribosyl)glycinamide + ADP + phosphate + H(+). It participates in purine metabolism; IMP biosynthesis via de novo pathway; N(1)-(5-phospho-D-ribosyl)glycinamide from 5-phospho-alpha-D-ribose 1-diphosphate: step 2/2. The protein is Phosphoribosylamine--glycine ligase of Mycobacterium leprae (strain TN).